Consider the following 121-residue polypeptide: Ribosome-binding factor A (121 aa).

Belongs to the RbfA family. Monomer. Binds 30S ribosomal subunits, but not 50S ribosomal subunits or 70S ribosomes.

The protein resides in the cytoplasm. In terms of biological role, one of several proteins that assist in the late maturation steps of the functional core of the 30S ribosomal subunit. Associates with free 30S ribosomal subunits (but not with 30S subunits that are part of 70S ribosomes or polysomes). Required for efficient processing of 16S rRNA. May interact with the 5'-terminal helix region of 16S rRNA. The polypeptide is Ribosome-binding factor A (Heliobacterium modesticaldum (strain ATCC 51547 / Ice1)).